The sequence spans 541 residues: MGSQEVLGQAARLASSGLLLQVLFRLITFVLNAFILRFLSKEIVGIVNVRLTLLYSTTTFLAREAFRRACLSGGAQRDWSQTLNLLWLTVPLGIFWSSCLGWVWLQLLEVPDPDVVPYYGTGVLFFGLSAVVELLGEPFWVLAQAHMFVKLKVLAESMSVILRSVLTALLVLWLPHWGLYIFSLAQLLYTTVLVLCYAIYLIQLLRSPESAKQLTLPVSRVTQLLPSISRSRAFVNWKEAGLAWSFFKQSFLKQILTEGERYVMTFLNVLNFGDQGVYDIVNNLGSLVARLIFQPVEESFYLFFAKVLEREKDASLQKQDDVAVAAAVLESLLKLALLTGLTMTVFGFAYSQLALDIYGGAMLSSGSGPVLMRCYCLYVLLLAINGVTECFMFAAMSKEEVDRYNFTMLALSSSFLVLSYLLTSWCGSVGFIMANCFNMGIRITQSLSFIHHYFRESPHRPLAGLRLSPVLLGVFILSAGITSVSEAFLCCERGWPARLAHIAVGTICLGVTLGTAFLTETKLIHFLRTQLGRSRLSDKMT.

11 helical membrane-spanning segments follow: residues 16-36, 45-62, 85-105, 123-143, 154-176, 187-207, 335-355, 376-396, 414-434, 470-490, and 499-519; these read SGLLLQVLFRLITFVLNAFIL, GIVNVRLTLLYSTTTFLA, LLWLTVPLGIFWSSCLGWVWL, VLFFGLSAVVELLGEPFWVLA, LAESMSVILRSVLTALLVLWLPH, LLYTTVLVLCYAIYLIQLLRS, LALLTGLTMTVFGFAYSQLAL, CLYVLLLAINGVTECFMFAAM, SFLVLSYLLTSWCGSVGFIMA, VLLGVFILSAGITSVSEAFLC, and LAHIAVGTICLGVTLGTAFLT.

It belongs to the RFT1 family.

It localises to the endoplasmic reticulum membrane. It functions in the pathway protein modification; protein glycosylation. Intramembrane glycolipid transporter that operates in the biosynthetic pathway of dolichol-linked oligosaccharides, the glycan precursors employed in protein asparagine (N)-glycosylation. The sequential addition of sugars to dolichol pyrophosphate produces dolichol-linked oligosaccharides containing fourteen sugars, including two GlcNAcs, nine mannoses and three glucoses. Once assembled, the oligosaccharide is transferred from the lipid to nascent proteins by oligosaccharyltransferases. The assembly of dolichol-linked oligosaccharides begins on the cytosolic side of the endoplasmic reticulum membrane and finishes in its lumen. RFT1 could mediate the translocation of the cytosolically oriented intermediate DolPP-GlcNAc2Man5, produced by ALG11, into the ER lumen where dolichol-linked oligosaccharides assembly continues. However, the intramembrane lipid transporter activity could not be confirmed in vitro. In Mus musculus (Mouse), this protein is Man(5)GlcNAc(2)-PP-dolichol translocation protein RFT1.